The primary structure comprises 135 residues: Small ribosomal subunit protein uS11 (135 aa).

Belongs to the universal ribosomal protein uS11 family. As to quaternary structure, part of the 30S ribosomal subunit. Interacts with proteins S7 and S18. Binds to IF-3.

In terms of biological role, located on the platform of the 30S subunit, it bridges several disparate RNA helices of the 16S rRNA. Forms part of the Shine-Dalgarno cleft in the 70S ribosome. In Protochlamydia amoebophila (strain UWE25), this protein is Small ribosomal subunit protein uS11.